Here is a 495-residue protein sequence, read N- to C-terminus: Glucose-6-phosphate 1-dehydrogenase (495 aa).

N-acetylserine is present on Ser-1. NADP(+) is bound by residues 15-22, Arg-49, and Lys-149; that span reads GASGDLAR. Residues Lys-149, 179 to 183, Glu-217, and Asp-236 contribute to the D-glucose 6-phosphate site; that span reads HYLGK. Catalysis depends on His-241, which acts as the Proton acceptor. Arg-332 provides a ligand contact to NADP(+). Lys-335 provides a ligand contact to D-glucose 6-phosphate. Lys-341, Arg-345, and Arg-367 together coordinate NADP(+). Gln-369 lines the D-glucose 6-phosphate pocket. NADP(+)-binding positions include 375-377, 395-397, and Lys-463; these read YLK and DLT.

The protein belongs to the glucose-6-phosphate dehydrogenase family.

It catalyses the reaction D-glucose 6-phosphate + NADP(+) = 6-phospho-D-glucono-1,5-lactone + NADPH + H(+). It functions in the pathway carbohydrate degradation; pentose phosphate pathway; D-ribulose 5-phosphate from D-glucose 6-phosphate (oxidative stage): step 1/3. Catalyzes the rate-limiting step of the oxidative pentose-phosphate pathway, which represents a route for the dissimilation of carbohydrates besides glycolysis. The main function of this enzyme is to provide reducing power (NADPH) and pentose phosphates for fatty acid and nucleic acid synthesis. The sequence is that of Glucose-6-phosphate 1-dehydrogenase from Cyberlindnera jadinii (Torula yeast).